We begin with the raw amino-acid sequence, 894 residues long: Glutamate receptor 3 (894 aa).

The signal sequence occupies residues methionine 1 to glycine 28. Topologically, residues glycine 29–alanine 552 are extracellular. N-linked (GlcNAc...) asparagine glycosylation is found at asparagine 63, asparagine 266, asparagine 380, asparagine 415, and asparagine 422. Residues cysteine 91 and cysteine 340 are joined by a disulfide bond. L-glutamate contacts are provided by proline 508, threonine 510, and arginine 515. A helical transmembrane segment spans residues tyrosine 553–valine 573. Residues serine 574–glutamate 602 lie on the Cytoplasmic side of the membrane. The helical; Pore-forming intramembrane region spans phenylalanine 603 to glutamine 618. An intramembrane segment occupies glutamine 619–cysteine 621. Cysteine 621 carries the S-palmitoyl cysteine lipid modification. Over aspartate 622–serine 627 the chain is Cytoplasmic. A helical membrane pass occupies residues leucine 628–tyrosine 648. At threonine 649–asparagine 823 the chain is on the extracellular side. Residues serine 686, threonine 687, and glutamate 737 each contribute to the L-glutamate site. Residues cysteine 750 and cysteine 805 are joined by a disulfide bond. The helical transmembrane segment at valine 824–isoleucine 844 threads the bilayer. At glutamate 845–isoleucine 894 the chain is on the cytoplasmic side. Cysteine 847 carries the S-palmitoyl cysteine lipid modification. Phosphotyrosine occurs at positions 877 and 887.

The protein belongs to the glutamate-gated ion channel (TC 1.A.10.1) family. GRIA3 subfamily. Homotetramer or heterotetramer of pore-forming glutamate receptor subunits. Tetramers may be formed by the dimerization of dimers. Interacts with PICK1, GRIP1 and GRIP2. Found in a complex with GRIA1, GRIA2, GRIA4, CNIH2, CNIH3, CACNG2, CACNG3, CACNG4, CACNG5, CACNG7 and CACNG8. Interacts with CACNG5. Found in a complex with GRIA1, GRIA2, GRIA4, DLG4, CACNG8 and CNIH2.

The protein localises to the cell membrane. It is found in the postsynaptic cell membrane. Its subcellular location is the postsynaptic density membrane. It catalyses the reaction Ca(2+)(in) = Ca(2+)(out). In terms of biological role, ionotropic glutamate receptor that functions as a ligand-gated cation channel, gated by L-glutamate and glutamatergic agonists such as alpha-amino-3-hydroxy-5-methyl-4-isoxazolepropionic acid (AMPA), quisqualic acid, and kainic acid. L-glutamate acts as an excitatory neurotransmitter at many synapses in the central nervous system and plays an important role in fast excitatory synaptic transmission by inducing long-term potentiation. Binding of the excitatory neurotransmitter L-glutamate induces a conformation change, leading to the opening of the cation channel, and thereby converts the chemical signal to an electrical impulse upon entry of calcium. The receptor then desensitizes rapidly and enters a transient inactive state, characterized by the presence of bound agonist. In the presence of CACNG8, shows resensitization which is characterized by a delayed accumulation of current flux upon continued application of glutamate. The protein is Glutamate receptor 3 of Homo sapiens (Human).